Reading from the N-terminus, the 407-residue chain is Ribonuclease Z (407 aa).

The segment at 1 to 308 (MEITFLGTSS…QDFLHYAIPR (308 aa)) is ribonuclease Z. Residues His-62, His-64, Asp-66, His-67, His-139, Asp-210, and His-268 each coordinate Zn(2+). Asp-66 serves as the catalytic Proton acceptor. The segment at 309–407 (DGQICAEMPP…VDWSALNVLF (99 aa)) is unknown.

It belongs to the RNase Z family. In terms of assembly, homodimer. Zn(2+) serves as cofactor.

The catalysed reaction is Endonucleolytic cleavage of RNA, removing extra 3' nucleotides from tRNA precursor, generating 3' termini of tRNAs. A 3'-hydroxy group is left at the tRNA terminus and a 5'-phosphoryl group is left at the trailer molecule.. In terms of biological role, zinc phosphodiesterase, which displays some tRNA 3'-processing endonuclease activity. Probably involved in tRNA maturation, by removing a 3'-trailer from precursor tRNA. The protein is Ribonuclease Z (rnz) of Thermosynechococcus vestitus (strain NIES-2133 / IAM M-273 / BP-1).